Consider the following 199-residue polypeptide: Probable GTP-binding protein EngB (199 aa).

The region spanning Asp28–Leu199 is the EngB-type G domain. GTP-binding positions include Gly36–Ser43, Gly63–Leu67, Asp81–Gly84, Thr148–Asp151, and Phe180–Ser182. Mg(2+)-binding residues include Ser43 and Thr65.

Belongs to the TRAFAC class TrmE-Era-EngA-EngB-Septin-like GTPase superfamily. EngB GTPase family. Mg(2+) is required as a cofactor.

In terms of biological role, necessary for normal cell division and for the maintenance of normal septation. This chain is Probable GTP-binding protein EngB, found in Streptococcus equi subsp. zooepidemicus (strain H70).